A 642-amino-acid polypeptide reads, in one-letter code: Zinc finger protein 14 (642 aa).

The region spanning 4–76 (VSFEDVAVNF…MVERLCESRK (73 aa)) is the KRAB domain. The segment at 103–125 (HECSFCGRDFMHHSSLNRHMRSH) adopts a C2H2-type 1 zinc-finger fold. The segment at 141-163 (RKHKAVEKTFSYHHCFRKHERTH) adopts a C2H2-type 2; degenerate zinc-finger fold. A C2H2-type 3 zinc finger spans residues 169-191 (YECKQCGKAFIYYQPFQRHERTH). The segment at 197-217 (YECKQCGKTFIYYQSFQQHAH) adopts a C2H2-type 4; atypical zinc-finger fold. 15 C2H2-type zinc fingers span residues 223 to 245 (YECK…ERTH), 251 to 273 (YECK…ERTH), 279 to 301 (YKCK…KRTH), 307 to 329 (YECK…VITH), 335 to 357 (YKCK…ERTH), 363 to 385 (YECK…ERTH), 391 to 413 (YECK…ETTH), 419 to 441 (YECK…ERTH), 447 to 469 (YECK…ERSH), 475 to 497 (YECK…ERTH), 503 to 525 (YECK…EKIH), 531 to 553 (FECK…ERTH), 559 to 581 (YQCK…ERTH), 587 to 609 (YRCK…ERSH), and 615 to 637 (YECK…ERTH).

Belongs to the krueppel C2H2-type zinc-finger protein family.

It is found in the nucleus. In terms of biological role, may be involved in transcriptional regulation. The sequence is that of Zinc finger protein 14 (ZNF14) from Pongo abelii (Sumatran orangutan).